The chain runs to 751 residues: MEGIKLNLCLLCIFTCDILGFSNGNIYNAHGSAYAGASAGAYKTLPNAYPYGTKHGPVYKPVKTSYHPTNSYPPTYGSKTNYLPLAKKLSSYKPIKTTYNAKTNYPPVYKPKMTYPPTYKPKPSYPPTYKPKPSYPATYKSKSSYPSSYKPKKTYPPTYKPKLTYPPTYKPKPSYPPTYKPKPSYPATYKSKSSYPPSYKTKKTYPSSYKPKKTYPSTYKPKVSYPPTYKSKKSYPPIYKTKASYPSSYKPKKTYPSTYKPKISYPPTYKAKPSYPTSYRAKPSYPSTYKAKPSYPPTYKAKPSYPPTYKAKPTYPSTYKAKPSYPPTYKAKPSYPPTYKAKPSYPPSYKPKTTYPPSYKPKISYPPTYKAKPSYPPIYKAKPSYPPTYKAKPSYLPTYKAKPSYPPTYKAKPRYPTTYKAKPSYPPTYKAKPSYPPTYKAKLSYPPTYKAKPSYPPTYKAKPSYPPTYKAKPSYPPTYKTKPSYPRTYKAKPSYSSTYKAKPSYPPTYKAKPSYPPTYKAKPSYPPTYKAKPSYPPTYKAKPSYPPTYKAKPSYPQTYKAKSSYPPTYKAKPSYPPTYKAKPSYPPTYKAKPSYPPTYKAKPSYPPTYKAKPSYPPTYKAKPSYPPTYKAKPSYPPTYKAKPSYPPTYKAKPSYPATYPSTYKAKPSYPPTYKAKPSYPPTYKPKPSYPPTYKSKSSYPSSYKPKKTYPPTYKPKLTYPPIYKPKPSYPPTYKSSYPPRYKKKISYPSQY.

The signal sequence occupies residues 1 to 20 (MEGIKLNLCLLCIFTCDILG). The nonrepetitive linker stretch occupies residues 21-41 (FSNGNIYNAHGSAYAGASAGA). 55 tandem repeats follow at residues 109–118 (YKPKMTYPPT), 119–128 (YKPKPSYPPT), 129–138 (YKPKPSYPAT), 139–148 (YKSKSSYPSS), 149–158 (YKPKKTYPPT), 159–168 (YKPKLTYPPT), 169–178 (YKPKPSYPPT), 179–188 (YKPKPSYPAT), 189–198 (YKSKSSYPPS), 199–208 (YKTKKTYPSS), 209–218 (YKPKKTYPST), 219–228 (YKPKVSYPPT), 229–238 (YKSKKSYPPI), 239–248 (YKTKASYPSS), 249–258 (YKPKKTYPST), 259–268 (YKPKISYPPT), 269–278 (YKAKPSYPTS), 279–288 (YRAKPSYPST), 289–298 (YKAKPSYPPT), 299–308 (YKAKPSYPPT), 309–318 (YKAKPTYPST), 319–328 (YKAKPSYPPT), 329–338 (YKAKPSYPPT), 339–348 (YKAKPSYPPS), 349–358 (YKPKTTYPPS), 359–368 (YKPKISYPPT), 369–378 (YKAKPSYPPI), 379–388 (YKAKPSYPPT), 389–398 (YKAKPSYLPT), 399–408 (YKAKPSYPPT), 409–418 (YKAKPRYPTT), 419–428 (YKAKPSYPPT), 429–438 (YKAKPSYPPT), 439–448 (YKAKLSYPPT), 449–458 (YKAKPSYPPT), 459–468 (YKAKPSYPPT), 469–478 (YKAKPSYPPT), 479–488 (YKTKPSYPRT), 489–498 (YKAKPSYSST), 499–508 (YKAKPSYPPT), 509–518 (YKAKPSYPPT), 519–528 (YKAKPSYPPT), 529–538 (YKAKPSYPPT), 539–548 (YKAKPSYPPT), 549–558 (YKAKPSYPQT), 559–568 (YKAKSSYPPT), 569–578 (YKAKPSYPPT), 579–588 (YKAKPSYPPT), 589–598 (YKAKPSYPPT), 599–608 (YKAKPSYPPT), 609–618 (YKAKPSYPPT), 619–628 (YKAKPSYPPT), 629–638 (YKAKPSYPPT), 639–648 (YKAKPSYPPT), and 649–658 (YKAKPSYPAT). Residues 109–732 (YKPKMTYPPT…YKPKPSYPPT (624 aa)) are 63 X 10 AA tandem repeats of Y-[KR]-[APTS]-K-[KPMSLTIVA]-[STR]-Y-[PLS]-[PASRQT]-[STI]. Residues 158–167 (TYKPKLTYPP) are compositionally biased toward low complexity. The tract at residues 158–359 (TYKPKLTYPP…KPKTTYPPSY (202 aa)) is disordered. Pro residues predominate over residues 168–184 (TYKPKPSYPPTYKPKPS). A compositionally biased stretch (low complexity) spans 185 to 262 (YPATYKSKSS…KTYPSTYKPK (78 aa)). Composition is skewed to low complexity over residues 288-343 (TYKA…KAKP) and 350-359 (KPKTTYPPSY). The interval 397–636 (PTYKAKPSYP…PTYKAKPSYP (240 aa)) is disordered. Over residues 444-486 (SYPPTYKAKPSYPPTYKAKPSYPPTYKAKPSYPPTYKTKPSYP) the composition is skewed to low complexity. A 56; truncated repeat occupies 659 to 662 (YPST). Residues 660-751 (PSTYKAKPSY…KKKISYPSQY (92 aa)) form a disordered region. Over residues 662–677 (TYKAKPSYPPTYKAKP) the composition is skewed to low complexity. Tandem repeats lie at residues 663–672 (YKAKPSYPPT), 673–682 (YKAKPSYPPT), 683–692 (YKPKPSYPPT), 693–702 (YKSKSSYPSS), 703–712 (YKPKKTYPPT), 713–722 (YKPKLTYPPI), and 723–732 (YKPKPSYPPT). The segment covering 678 to 690 (SYPPTYKPKPSYP) has biased composition (pro residues). Over residues 691–721 (PTYKSKSSYPSSYKPKKTYPPTYKPKLTYPP) the composition is skewed to low complexity.

In terms of processing, hydroxylated on proline (mono- or dihydroxylation) and tyrosine residues (to L-DOPA = 3',4'-dihydroxyphenylalanine) of the tandem repeats. Produced by the byssal gland.

The protein localises to the secreted. Functionally, provides adhesiveness to the mussel's foot. Mussels produce one of the strongest water insoluble glues. The mussel's adhesive is a bundle of threads, called a byssus, formed by a fibrous collagenous core coated with adhesive proteins. This chain is Adhesive plaque matrix protein (FP1), found in Mytilus galloprovincialis (Mediterranean mussel).